The chain runs to 89 residues: MAHKKAGGSSRNGRDSESKRLGVKKFGGEAVLAGNIIVRQRGTKWHPGANVGLGKDHTIFATTNGSVSFRTKANGRTYVSVDPIAEAAE.

A disordered region spans residues 1–21; the sequence is MAHKKAGGSSRNGRDSESKRL.

Belongs to the bacterial ribosomal protein bL27 family.

The polypeptide is Large ribosomal subunit protein bL27 (Brucella anthropi (strain ATCC 49188 / DSM 6882 / CCUG 24695 / JCM 21032 / LMG 3331 / NBRC 15819 / NCTC 12168 / Alc 37) (Ochrobactrum anthropi)).